An 88-amino-acid chain; its full sequence is MITADNITSHEFIGLNTEIVQSTNPQVIGLNGRIENETKSMFTINTENGMKSIAKSTSNWKFSIDSNDVIVEGSRIAKRPFDRIGGKA.

Belongs to the eukaryotic/archaeal RNase P protein component 1 family. In terms of assembly, consists of a catalytic RNA component and at least 4-5 protein subunits.

It localises to the cytoplasm. It carries out the reaction Endonucleolytic cleavage of RNA, removing 5'-extranucleotides from tRNA precursor.. Functionally, part of ribonuclease P, a protein complex that generates mature tRNA molecules by cleaving their 5'-ends. The sequence is that of Ribonuclease P protein component 1 from Nitrosopumilus maritimus (strain SCM1).